The sequence spans 132 residues: Small ribosomal subunit protein uS8c (132 aa).

Belongs to the universal ribosomal protein uS8 family. As to quaternary structure, part of the 30S ribosomal subunit.

Its subcellular location is the plastid. It is found in the chloroplast. Functionally, one of the primary rRNA binding proteins, it binds directly to 16S rRNA central domain where it helps coordinate assembly of the platform of the 30S subunit. In Drimys granadensis, this protein is Small ribosomal subunit protein uS8c (rps8).